We begin with the raw amino-acid sequence, 233 residues long: Orotate phosphoribosyltransferase (233 aa).

K29 lines the 5-phospho-alpha-D-ribose 1-diphosphate pocket. 37-38 contacts orotate; that stretch reads FF. Residues 79–80, R109, K110, K113, H115, and 135–143 each bind 5-phospho-alpha-D-ribose 1-diphosphate; these read YK and DDVITAGTA. Orotate contacts are provided by T139 and R167.

This sequence belongs to the purine/pyrimidine phosphoribosyltransferase family. PyrE subfamily. As to quaternary structure, homodimer.

The enzyme catalyses orotidine 5'-phosphate + diphosphate = orotate + 5-phospho-alpha-D-ribose 1-diphosphate. The protein operates within pyrimidine metabolism; UMP biosynthesis via de novo pathway; UMP from orotate: step 1/2. In terms of biological role, catalyzes the transfer of a ribosyl phosphate group from 5-phosphoribose 1-diphosphate to orotate, leading to the formation of orotidine monophosphate (OMP). This Neurospora crassa (strain ATCC 24698 / 74-OR23-1A / CBS 708.71 / DSM 1257 / FGSC 987) protein is Orotate phosphoribosyltransferase (ura-5).